We begin with the raw amino-acid sequence, 139 residues long: Ribosomal RNA large subunit methyltransferase H (139 aa).

Residues Leu-56, Gly-88, and 107 to 112 (LSLMTF) contribute to the S-adenosyl-L-methionine site.

The protein belongs to the RNA methyltransferase RlmH family. In terms of assembly, homodimer.

It localises to the cytoplasm. It carries out the reaction pseudouridine(1915) in 23S rRNA + S-adenosyl-L-methionine = N(3)-methylpseudouridine(1915) in 23S rRNA + S-adenosyl-L-homocysteine + H(+). Functionally, specifically methylates the pseudouridine at position 1915 (m3Psi1915) in 23S rRNA. This chain is Ribosomal RNA large subunit methyltransferase H, found in Coprothermobacter proteolyticus (strain ATCC 35245 / DSM 5265 / OCM 4 / BT).